Here is a 101-residue protein sequence, read N- to C-terminus: RNA-binding protein Hfq (101 aa).

The 60-residue stretch at 9–68 (DPFLNALRRERVPVSIYLVNGIKLQGQVESFDQFVILLKNTVSQMVYKHAISTVVPSPPV) folds into the Sm domain. The tract at residues 62 to 101 (VVPSPPVSHHSNTPSGSTNNYHGSNPSAPQQPQQDSDDAE) is disordered. Polar residues predominate over residues 70–86 (HHSNTPSGSTNNYHGSN).

It belongs to the Hfq family. Homohexamer.

Functionally, RNA chaperone that binds small regulatory RNA (sRNAs) and mRNAs to facilitate mRNA translational regulation in response to envelope stress, environmental stress and changes in metabolite concentrations. Also binds with high specificity to tRNAs. The protein is RNA-binding protein Hfq of Yersinia pestis (strain Pestoides F).